A 463-amino-acid polypeptide reads, in one-letter code: Asparagine--tRNA ligase (463 aa).

Belongs to the class-II aminoacyl-tRNA synthetase family. In terms of assembly, homodimer.

Its subcellular location is the cytoplasm. It catalyses the reaction tRNA(Asn) + L-asparagine + ATP = L-asparaginyl-tRNA(Asn) + AMP + diphosphate + H(+). This chain is Asparagine--tRNA ligase, found in Clostridium acetobutylicum (strain ATCC 824 / DSM 792 / JCM 1419 / IAM 19013 / LMG 5710 / NBRC 13948 / NRRL B-527 / VKM B-1787 / 2291 / W).